We begin with the raw amino-acid sequence, 823 residues long: Leucine--tRNA ligase (823 aa).

Residues 55–65 (PYPSGNLHIGH) carry the 'HIGH' region motif. A 'KMSKS' region motif is present at residues 590-594 (KMSKS). Lysine 593 is a binding site for ATP.

This sequence belongs to the class-I aminoacyl-tRNA synthetase family.

The protein resides in the cytoplasm. It carries out the reaction tRNA(Leu) + L-leucine + ATP = L-leucyl-tRNA(Leu) + AMP + diphosphate. The sequence is that of Leucine--tRNA ligase from Deinococcus radiodurans (strain ATCC 13939 / DSM 20539 / JCM 16871 / CCUG 27074 / LMG 4051 / NBRC 15346 / NCIMB 9279 / VKM B-1422 / R1).